Consider the following 576-residue polypeptide: Ferroportin (576 aa).

The Cytoplasmic portion of the chain corresponds to 1-23; that stretch reads MPKAGEQARQGGCCGSLANYLTS. The helical transmembrane segment at 24–53 threads the bilayer; sequence AKFLLYLGHSLSTWGDRMWHFAVSVFLVEL. The Fe cation site is built by Asp-39 and His-43. Residues 54 to 57 lie on the Extracellular side of the membrane; the sequence is YGNS. The helical transmembrane segment at 58–84 threads the bilayer; sequence LLLTAVYGLVVAGSVLVLGAIIGDWVD. At 85 to 87 the chain is on the cytoplasmic side; it reads KNA. The helical transmembrane segment at 88–118 threads the bilayer; that stretch reads RLKVAQTSLVVQNVSVILCGIILMMVFLHKN. Residues 119 to 126 lie on the Extracellular side of the membrane; that stretch reads ELLTMYHG. Residues 127-162 form a helical membrane-spanning segment; that stretch reads WVLTFCYILIITIADVANLASTATAITIQRDWIVVV. The Cytoplasmic segment spans residues 163–164; that stretch reads AG. A helical membrane pass occupies residues 165 to 195; sequence GDRSKLADMNATIRRIDQLTNILAPMAVGQI. The Extracellular portion of the chain corresponds to 196–202; that stretch reads MTFGSAV. The helical transmembrane segment at 203-229 threads the bilayer; it reads IGCGFISGWNLVSMCVEYFLLWKVYQK. The Cytoplasmic segment spans residues 230–306; sequence TPALAVKAAL…DGWVSYYNQS (77 aa). A helical transmembrane segment spans residues 307 to 333; that stretch reads VFLAGMGLAFLYMTVLGFDCITTGYAY. Cys-326 contributes to the Fe cation binding site. Residues 334–338 are Extracellular-facing; that stretch reads TQGLS. The chain crosses the membrane as a helical span at residues 339–366; it reads GSILSILMGASAITGIMGTVAFTWLRRK. The Cytoplasmic portion of the chain corresponds to 367–368; that stretch reads CG. A helical transmembrane segment spans residues 369-391; sequence LVRTGLISGFAQLSCLILCVISV. Over 392-458 the chain is Extracellular; sequence FMPGSPLDLS…ETTPKSVPII (67 aa). Residue Asn-439 is glycosylated (N-linked (GlcNAc...) asparagine). Residues 459-488 traverse the membrane as a helical segment; sequence SVSLLFAGVIAARIGLWSFDLTVTQLLQEN. Over 489–493 the chain is Cytoplasmic; sequence VIESE. A helical membrane pass occupies residues 494-518; it reads RGIINGVQNSMNYLLDLLHFIMVIL. Residue His-512 participates in Fe cation binding. At 519–521 the chain is on the extracellular side; sequence APN. A helical membrane pass occupies residues 522–547; it reads PEAFGLLVLISVSFVAMGHIMYFRFA. Over 548–576 the chain is Cytoplasmic; that stretch reads QKTLGSKLFACGADDEEVTNENQANTSVV.

This sequence belongs to the ferroportin (FP) (TC 2.A.100) family. SLC40A subfamily. In terms of assembly, identified in a complex with STOM. Interacts with HAMP; affinity of the peptide hormone HAMP for SLC40A1 increases by 80-fold in the presence of iron and the interaction promotes SLC40A1 ubiquitination and degradation. Part of a complex composed of SLC40A1/ferroportin, TF/transferrin and HEPH/hephaestin that transfers iron from cells to transferrin. Polyubiquitinated by RNF217; leading to proteasomal degradation. Under conditions of high systemic iron levels, both the hormone peptide hepcidin/HAMP and holo(iron bound)-transferrin/TF induce the ubiquitination, internalization and proteasomal degradation of SLC40A1 to control iron release from cells.

It is found in the cell membrane. Its subcellular location is the basolateral cell membrane. It catalyses the reaction Fe(2+)(in) = Fe(2+)(out). With respect to regulation, during elevated serum iron levels, liver-derived hepcidin/HAMP negatively regulates cell surface ferroportin/SLC40A1 by inducing its ubiquitination, internalization, and degradation. Indeed, hepcidin/HAMP affinity towards ferroportin/SLC40A1 increases by 80-fold in the presence of iron. In terms of biological role, transports Fe(2+) from the inside of a cell to the outside of the cell, playing a key role for maintaining systemic iron homeostasis. Transports iron from intestinal, splenic, hepatic cells, macrophages and erythrocytes into the blood to provide iron to other tissues. Controls therefore dietary iron uptake, iron recycling by macrophages and erythrocytes, and release of iron stores in hepatocytes. When iron is in excess in serum, circulating HAMP/hepcidin levels increase resulting in a degradation of SLC40A1, thus limiting the iron efflux to plasma. This chain is Ferroportin, found in Canis lupus familiaris (Dog).